We begin with the raw amino-acid sequence, 161 residues long: Nucleotide-binding protein BceJ2315_27070 (161 aa).

This sequence belongs to the YajQ family.

Nucleotide-binding protein. The polypeptide is Nucleotide-binding protein BceJ2315_27070 (Burkholderia cenocepacia (strain ATCC BAA-245 / DSM 16553 / LMG 16656 / NCTC 13227 / J2315 / CF5610) (Burkholderia cepacia (strain J2315))).